The sequence spans 122 residues: Large ribosomal subunit protein uL14c (122 aa).

It belongs to the universal ribosomal protein uL14 family. In terms of assembly, part of the 50S ribosomal subunit.

Its subcellular location is the plastid. The protein resides in the chloroplast. Functionally, binds to 23S rRNA. This Porphyra purpurea (Red seaweed) protein is Large ribosomal subunit protein uL14c.